Reading from the N-terminus, the 450-residue chain is Zinc finger protein 277 (450 aa).

At Ala-2 the chain carries N-acetylalanine. 2 consecutive C2H2-type zinc fingers follow at residues 224 to 248 (LQCLYCEKTFRDKNTLKDHMRKKQH) and 355 to 381 (HQCRCYGCHVKFKSKADLRTHMEETKH).

This sequence belongs to the ZNF277 family. Interacts (via zinc-finger domains) with RPS2/40S ribosomal protein S2, perhaps as nascent RPS2 is synthesized during translation; the interaction is direct; the interaction is extra-ribosomal. Interaction with RPS2 competes with the binding of RPS2 to protein arginine methyltransferase PRMT3. Interacts with Polycomb group (PcG) complex protein BMI1. May be part of a complex including at least ZNF277, BMI1 and RNF2/RING2.

Its subcellular location is the nucleus. Its function is as follows. Probable transcription factor. Involved in modulation of cellular senescence; represses transcription of the tumor suppressor gene INK4A/ARF, perhaps acting via the Polycomb group (PcG) complex PRC1. This chain is Zinc finger protein 277 (ZNF277), found in Homo sapiens (Human).